The chain runs to 498 residues: Probable cytosol aminopeptidase (498 aa).

Mn(2+) is bound by residues Lys-263 and Asp-268. The active site involves Lys-275. 3 residues coordinate Mn(2+): Asp-286, Asp-345, and Glu-347. Residue Arg-349 is part of the active site.

It belongs to the peptidase M17 family. Mn(2+) is required as a cofactor.

The protein resides in the cytoplasm. The enzyme catalyses Release of an N-terminal amino acid, Xaa-|-Yaa-, in which Xaa is preferably Leu, but may be other amino acids including Pro although not Arg or Lys, and Yaa may be Pro. Amino acid amides and methyl esters are also readily hydrolyzed, but rates on arylamides are exceedingly low.. It catalyses the reaction Release of an N-terminal amino acid, preferentially leucine, but not glutamic or aspartic acids.. Its function is as follows. Presumably involved in the processing and regular turnover of intracellular proteins. Catalyzes the removal of unsubstituted N-terminal amino acids from various peptides. The sequence is that of Probable cytosol aminopeptidase from Rhodopseudomonas palustris (strain BisA53).